The primary structure comprises 397 residues: Decapping and exoribonuclease protein (397 aa).

The span at 1 to 10 (MEPRGTKRKA) shows a compositional bias: basic residues. The segment at 1–30 (MEPRGTKRKAEKTEVEKPLNKLPRAVPSLR) is disordered. Substrate-binding positions include Arg-58, Glu-101, and 131 to 133 (WRG). An adenosine 3',5'-bisphosphate-binding site is contributed by Met-185. Glu-192 provides a ligand contact to Mg(2+). 2 residues coordinate substrate: Cys-217 and Glu-234. Residues Glu-234, Asp-236, Glu-253, and Leu-254 each contribute to the Mg(2+) site. Position 236 (Asp-236) interacts with adenosine 3',5'-bisphosphate. Residues 253–256 (ELKT) are adenosine 3',5'-bisphosphate; inhibitor. Substrate contacts are provided by Lys-255 and Gln-280. Position 280 (Gln-280) interacts with adenosine 3',5'-bisphosphate. A Phosphothreonine modification is found at Thr-392. Residue Ser-394 is modified to Phosphoserine.

The protein belongs to the DXO/Dom3Z family. The cofactor is Mg(2+).

The protein localises to the nucleus. The enzyme catalyses a 5'-end triphospho-ribonucleoside in mRNA + H2O = a 5'-end phospho-ribonucleoside in mRNA + diphosphate + H(+). It catalyses the reaction a 5'-end NAD(+)-phospho-ribonucleoside in mRNA + H2O = a 5'-end phospho-ribonucleoside in mRNA + NAD(+) + H(+). It carries out the reaction a 5'-end NAD(+)-phospho-ribonucleoside in snoRNA + H2O = a 5'-end phospho-ribonucleoside in snoRNA + NAD(+) + H(+). The catalysed reaction is a 5'-end (N(7)-methyl 5'-triphosphoguanosine)-ribonucleoside-ribonucleotide in mRNA + H2O = a (N(7)-methyl 5'-triphosphoguanosine)-nucleoside + a 5'-end phospho-ribonucleoside in mRNA + H(+). The enzyme catalyses a 5'-end FAD-phospho-ribonucleoside in mRNA + H2O = a 5'-end phospho-ribonucleoside in mRNA + FAD + H(+). It catalyses the reaction a 5'-end CoA-ribonucleoside in mRNA + H2O = 3'-dephospho-CoA + a 5'-end phospho-ribonucleoside in mRNA + H(+). With respect to regulation, the 5'-3' exoribonuclease activity is inhibited by adenosine 3',5'-bisphosphate. In terms of biological role, decapping enzyme for NAD-capped RNAs: specifically hydrolyzes the nicotinamide adenine dinucleotide (NAD) cap from a subset of RNAs by removing the entire NAD moiety from the 5'-end of an NAD-capped RNA. The NAD-cap is present at the 5'-end of some RNAs and snoRNAs. In contrast to the canonical 5'-end N7 methylguanosine (m7G) cap, the NAD cap promotes mRNA decay. Preferentially acts on NAD-capped transcripts in response to environmental stress. Also acts as a non-canonical decapping enzyme that removes the entire cap structure of m7G capped or incompletely capped RNAs and mediates their subsequent degradation. Specifically degrades pre-mRNAs with a defective 5'-end m7G cap and is part of a pre-mRNA capping quality control. Has decapping activity toward incomplete 5'-end m7G cap mRNAs such as unmethylated 5'-end-capped RNA (cap0), while it has no activity toward 2'-O-ribose methylated m7G cap (cap1). In contrast to canonical decapping enzymes DCP2 and NUDT16, which cleave the cap within the triphosphate linkage, the decapping activity releases the entire cap structure GpppN and a 5'-end monophosphate RNA. Also has 5'-3' exoribonuclease activities: The 5'-end monophosphate RNA is then degraded by the 5'-3' exoribonuclease activity, enabling this enzyme to decap and degrade incompletely capped mRNAs. Also possesses RNA 5'-pyrophosphohydrolase activity by hydrolyzing the 5'-end triphosphate to release pyrophosphates. Exhibits decapping activity towards FAD-capped RNAs. Exhibits decapping activity towards dpCoA-capped RNAs in vitro. The sequence is that of Decapping and exoribonuclease protein from Mus musculus (Mouse).